A 252-amino-acid polypeptide reads, in one-letter code: GTP cyclohydrolase 1 type 2 homolog (252 aa).

A divalent metal cation-binding residues include His-65, His-66, Asp-103, His-220, and Glu-224.

This sequence belongs to the GTP cyclohydrolase I type 2/NIF3 family. In terms of assembly, homohexamer.

This chain is GTP cyclohydrolase 1 type 2 homolog, found in Pseudomonas aeruginosa (strain ATCC 15692 / DSM 22644 / CIP 104116 / JCM 14847 / LMG 12228 / 1C / PRS 101 / PAO1).